A 275-amino-acid polypeptide reads, in one-letter code: Dermonecrotic toxin SpeSicTox-betaIIA3i (275 aa).

H5 is a catalytic residue. Mg(2+)-binding residues include E25 and D27. H41 functions as the Nucleophile in the catalytic mechanism. 2 cysteine pairs are disulfide-bonded: C45–C51 and C47–C190. A Mg(2+)-binding site is contributed by D85.

Belongs to the arthropod phospholipase D family. Class II subfamily. The cofactor is Mg(2+). In terms of tissue distribution, expressed by the venom gland.

It localises to the secreted. The enzyme catalyses an N-(acyl)-sphingosylphosphocholine = an N-(acyl)-sphingosyl-1,3-cyclic phosphate + choline. It catalyses the reaction an N-(acyl)-sphingosylphosphoethanolamine = an N-(acyl)-sphingosyl-1,3-cyclic phosphate + ethanolamine. The catalysed reaction is a 1-acyl-sn-glycero-3-phosphocholine = a 1-acyl-sn-glycero-2,3-cyclic phosphate + choline. It carries out the reaction a 1-acyl-sn-glycero-3-phosphoethanolamine = a 1-acyl-sn-glycero-2,3-cyclic phosphate + ethanolamine. In terms of biological role, dermonecrotic toxins cleave the phosphodiester linkage between the phosphate and headgroup of certain phospholipids (sphingolipid and lysolipid substrates), forming an alcohol (often choline) and a cyclic phosphate. This toxin acts on sphingomyelin (SM). It may also act on ceramide phosphoethanolamine (CPE), lysophosphatidylcholine (LPC) and lysophosphatidylethanolamine (LPE), but not on lysophosphatidylserine (LPS), and lysophosphatidylglycerol (LPG). It acts by transphosphatidylation, releasing exclusively cyclic phosphate products as second products. Induces dermonecrosis, hemolysis, increased vascular permeability, edema, inflammatory response, and platelet aggregation. This Sicarius peruensis (Six-eyed sand spider) protein is Dermonecrotic toxin SpeSicTox-betaIIA3i.